We begin with the raw amino-acid sequence, 297 residues long: 4-hydroxy-tetrahydrodipicolinate synthase (297 aa).

Thr-49 is a binding site for pyruvate. The active-site Proton donor/acceptor is the Tyr-137. Lys-166 acts as the Schiff-base intermediate with substrate in catalysis. Ile-208 is a pyruvate binding site.

This sequence belongs to the DapA family. As to quaternary structure, homotetramer; dimer of dimers.

The protein resides in the cytoplasm. The catalysed reaction is L-aspartate 4-semialdehyde + pyruvate = (2S,4S)-4-hydroxy-2,3,4,5-tetrahydrodipicolinate + H2O + H(+). The protein operates within amino-acid biosynthesis; L-lysine biosynthesis via DAP pathway; (S)-tetrahydrodipicolinate from L-aspartate: step 3/4. In terms of biological role, catalyzes the condensation of (S)-aspartate-beta-semialdehyde [(S)-ASA] and pyruvate to 4-hydroxy-tetrahydrodipicolinate (HTPA). The chain is 4-hydroxy-tetrahydrodipicolinate synthase from Porphyromonas gingivalis (strain ATCC 33277 / DSM 20709 / CIP 103683 / JCM 12257 / NCTC 11834 / 2561).